The chain runs to 283 residues: Release factor glutamine methyltransferase (283 aa).

Residues 121-125 (GTGSG), Asp-144, and Asn-188 contribute to the S-adenosyl-L-methionine site. 188 to 191 (NPPY) is a binding site for substrate.

Belongs to the protein N5-glutamine methyltransferase family. PrmC subfamily.

It catalyses the reaction L-glutaminyl-[peptide chain release factor] + S-adenosyl-L-methionine = N(5)-methyl-L-glutaminyl-[peptide chain release factor] + S-adenosyl-L-homocysteine + H(+). Functionally, methylates the class 1 translation termination release factors RF1/PrfA and RF2/PrfB on the glutamine residue of the universally conserved GGQ motif. The protein is Release factor glutamine methyltransferase of Bacillus cereus (strain ATCC 14579 / DSM 31 / CCUG 7414 / JCM 2152 / NBRC 15305 / NCIMB 9373 / NCTC 2599 / NRRL B-3711).